Reading from the N-terminus, the 268-residue chain is Nickel import ATP-binding protein NikE (268 aa).

The ABC transporter domain occupies 4-252 (LNVSDLSHHY…SSDAGRVLQN (249 aa)). 45-52 (GRSGCGKS) serves as a coordination point for ATP.

This sequence belongs to the ABC transporter superfamily. Nickel importer (TC 3.A.1.5.3) family. The complex is composed of two ATP-binding proteins (NikD and NikE), two transmembrane proteins (NikB and NikC) and a solute-binding protein (NikA).

The protein resides in the cell inner membrane. The catalysed reaction is Ni(2+)(out) + ATP + H2O = Ni(2+)(in) + ADP + phosphate + H(+). In terms of biological role, part of the ABC transporter complex NikABCDE involved in nickel import. Responsible for energy coupling to the transport system. This chain is Nickel import ATP-binding protein NikE, found in Shigella dysenteriae serotype 1 (strain Sd197).